Here is a 70-residue protein sequence, read N- to C-terminus: Conotoxin Lt11.2 (70 aa).

The signal sequence occupies residues 1–26 (MMFRLTSVSCFLLFIVFLNLVVLTNA). Cystine bridges form between Cys-27/Cys-41, Cys-34/Cys-46, Cys-40/Cys-50, and Cys-45/Cys-54. Proline amide is present on Pro-57. A propeptide spanning residues 61 to 70 (EKLQEFFRQR) is cleaved from the precursor.

This sequence belongs to the conotoxin I2 superfamily. In terms of tissue distribution, expressed by the venom duct.

The protein localises to the secreted. In Conus litteratus (Lettered cone), this protein is Conotoxin Lt11.2.